A 148-amino-acid polypeptide reads, in one-letter code: Meiosis inducing protein mei3 (148 aa).

The span at 1-20 shows a compositional bias: polar residues; it reads MSSQNTSNSRHPASSASALP. Residues 1 to 96 form a disordered region; sequence MSSQNTSNSR…AQRIEHENKE (96 aa). Over residues 21–46 the composition is skewed to low complexity; it reads NRTNTARRSTSPRTSTGSSSTNTNTK. The segment covering 75 to 86 has biased composition (basic residues); the sequence is PMKRTKRVRRTP.

Acts as a critical meiotic inducer by binding non-covalently to protein kinase ran1/pat1 inhibiting its enzymatic activity. Inhibits ran1/pat1 by acting as a pseudosubstrate for ran1/pat1 instead of its natural substrate ste11. Inactivation of the ran1/pat1 protein kinase is both necessary and sufficient to divert a vegetative cell from mitotic division to meiotic differentiation. This Schizosaccharomyces pombe (strain 972 / ATCC 24843) (Fission yeast) protein is Meiosis inducing protein mei3.